Consider the following 203-residue polypeptide: ATP-dependent Clp protease proteolytic subunit (203 aa).

Ser-107 (nucleophile) is an active-site residue. The active site involves His-132.

The protein belongs to the peptidase S14 family. Fourteen ClpP subunits assemble into 2 heptameric rings which stack back to back to give a disk-like structure with a central cavity, resembling the structure of eukaryotic proteasomes.

Its subcellular location is the cytoplasm. It catalyses the reaction Hydrolysis of proteins to small peptides in the presence of ATP and magnesium. alpha-casein is the usual test substrate. In the absence of ATP, only oligopeptides shorter than five residues are hydrolyzed (such as succinyl-Leu-Tyr-|-NHMec, and Leu-Tyr-Leu-|-Tyr-Trp, in which cleavage of the -Tyr-|-Leu- and -Tyr-|-Trp bonds also occurs).. In terms of biological role, cleaves peptides in various proteins in a process that requires ATP hydrolysis. Has a chymotrypsin-like activity. Plays a major role in the degradation of misfolded proteins. The chain is ATP-dependent Clp protease proteolytic subunit from Shewanella frigidimarina (strain NCIMB 400).